Reading from the N-terminus, the 366-residue chain is Probable cyclin-dependent kinase 10 (366 aa).

The Protein kinase domain maps to 7 to 293 (FEKLDSIGEG…ASDAIKHPFF (287 aa)). ATP is bound by residues 13–21 (IGEGTYGIV) and lysine 36. Aspartate 132 (proton acceptor) is an active-site residue. The segment covering 315 to 358 (FKNQNKKQNNNFNNFVQNNQTNQNNQTNQNNQTNQNNKTSQNNN) has biased composition (low complexity). Residues 315-366 (FKNQNKKQNNNFNNFVQNNQTNQNNQTNQNNQTNQNNKTSQNNNMDSYKYSK) are disordered.

Belongs to the protein kinase superfamily. CMGC Ser/Thr protein kinase family. CDC2/CDKX subfamily.

It carries out the reaction L-seryl-[protein] + ATP = O-phospho-L-seryl-[protein] + ADP + H(+). The enzyme catalyses L-threonyl-[protein] + ATP = O-phospho-L-threonyl-[protein] + ADP + H(+). The protein is Probable cyclin-dependent kinase 10 (cdk10) of Dictyostelium discoideum (Social amoeba).